Reading from the N-terminus, the 194-residue chain is Translation machinery-associated protein 22 (194 aa).

Positions 102 to 173 (VQIKRVERNK…DVQEWLLELY (72 aa)) constitute an SUI1 domain.

The protein belongs to the DENR family. In terms of assembly, interacts with the 40S ribosomal subunit.

It is found in the cytoplasm. This chain is Translation machinery-associated protein 22 (tma22), found in Neosartorya fischeri (strain ATCC 1020 / DSM 3700 / CBS 544.65 / FGSC A1164 / JCM 1740 / NRRL 181 / WB 181) (Aspergillus fischerianus).